The following is a 321-amino-acid chain: Aspartate carbamoyltransferase catalytic subunit (321 aa).

Residues Arg64 and Thr65 each contribute to the carbamoyl phosphate site. Lys92 contributes to the L-aspartate binding site. Positions 114, 142, and 145 each coordinate carbamoyl phosphate. L-aspartate is bound by residues Arg175 and Arg229. The carbamoyl phosphate site is built by Gly270 and Pro271.

Belongs to the aspartate/ornithine carbamoyltransferase superfamily. ATCase family. Heterododecamer (2C3:3R2) of six catalytic PyrB chains organized as two trimers (C3), and six regulatory PyrI chains organized as three dimers (R2).

The catalysed reaction is carbamoyl phosphate + L-aspartate = N-carbamoyl-L-aspartate + phosphate + H(+). It functions in the pathway pyrimidine metabolism; UMP biosynthesis via de novo pathway; (S)-dihydroorotate from bicarbonate: step 2/3. In terms of biological role, catalyzes the condensation of carbamoyl phosphate and aspartate to form carbamoyl aspartate and inorganic phosphate, the committed step in the de novo pyrimidine nucleotide biosynthesis pathway. This is Aspartate carbamoyltransferase catalytic subunit from Azorhizobium caulinodans (strain ATCC 43989 / DSM 5975 / JCM 20966 / LMG 6465 / NBRC 14845 / NCIMB 13405 / ORS 571).